Reading from the N-terminus, the 124-residue chain is Large ribosomal subunit protein bL17 (124 aa).

Belongs to the bacterial ribosomal protein bL17 family. As to quaternary structure, part of the 50S ribosomal subunit. Contacts protein L32.

The protein is Large ribosomal subunit protein bL17 of Acidithiobacillus ferrooxidans (strain ATCC 23270 / DSM 14882 / CIP 104768 / NCIMB 8455) (Ferrobacillus ferrooxidans (strain ATCC 23270)).